A 257-amino-acid chain; its full sequence is MPSLKISPSEAEKIQNYLVSSGFRKINAPYTLWALEGNGVKVYYYKTGSLLIQGKNSEKVLKEVLNLLEKKKLPGCDESGKGDIFGSLVLCCVCIPEENYLKVSSLNPRDTKRLSDKRVERLYLALKPLVKAYCYEIKPEEYNKLYRKFRNLNKMMTHFYKLLIERVKEECGVSEVVVDKYQPSNPFGEDVIFETEAERNLAVAVASIFARYKFLQSLKEVERELGIKIPKGTSKEVKELAKSLKNPERFIKLNFNV.

The 187-residue stretch at 71–257 (KKLPGCDESG…ERFIKLNFNV (187 aa)) folds into the RNase H type-2 domain. A divalent metal cation contacts are provided by Asp-77, Glu-78, and Asp-179.

Belongs to the RNase HII family. RnhC subfamily. It depends on Mn(2+) as a cofactor. The cofactor is Mg(2+).

The protein resides in the cytoplasm. The enzyme catalyses Endonucleolytic cleavage to 5'-phosphomonoester.. Functionally, endonuclease that specifically degrades the RNA of RNA-DNA hybrids. The sequence is that of Ribonuclease HIII (rnhC) from Aquifex aeolicus (strain VF5).